The sequence spans 605 residues: F-box/WD repeat-containing protein pof1 (605 aa).

The region spanning 107–153 (LDFLSLLPVEISFRILSFLDARSLCQAAQVSKHWKELADDDVIWHRM) is the F-box domain. The span at 195–212 (GVDQAHESSPVKKAKLDD) shows a compositional bias: basic and acidic residues. The interval 195–231 (GVDQAHESSPVKKAKLDDYPTSSNEETISSVKPPSPN) is disordered. Residues 214–231 (PTSSNEETISSVKPPSPN) show a composition bias toward polar residues. A phosphoserine mark is found at Ser229 and Ser232. 7 WD repeats span residues 271–299 (GHSDGVMCLQLVRNILASGSYDATIRLWN), 311–339 (GHSSGVTCLQFDQCKLISGSMDKTIRIWN), 350–379 (HGHTDSVLCLTFDSTLLVSGSADCTVKLWH), 390–420 (GHTGPVNSVRIIRDRGLVLSGSDDSTIKIWS), 432–460 (AHIGPVQSLALADSRLFSCSLDGTIKQWD), 472–500 (GHIEGVWEIAADHLRLISGAHDGVVKVWE), and 510–538 (NHSEPVTSVALGDCEVVSGSEDGKIYLWL).

As to quaternary structure, a part of the E3 ubiquitin ligase Skp1-Cullin-1-F-box (SCF) complex. Interacts with cul1, skp1 and phosphorylated zip1.

It localises to the nucleus. Probably recognizes and binds to some phosphorylated proteins and promotes their ubiquitination and degradation. Required for the inactivation of zip1 via ubiquitination. The polypeptide is F-box/WD repeat-containing protein pof1 (pof1) (Schizosaccharomyces pombe (strain 972 / ATCC 24843) (Fission yeast)).